Consider the following 538-residue polypeptide: Eukaryotic translation initiation factor 3 subunit L (538 aa).

The region spanning 305–513 is the PCI domain; it reads TFSDILLYIQ…IHIADTKVSH (209 aa).

It belongs to the eIF-3 subunit L family. In terms of assembly, component of the eukaryotic translation initiation factor 3 (eIF-3) complex. The eIF-3 complex interacts with pix.

The protein resides in the cytoplasm. In terms of biological role, component of the eukaryotic translation initiation factor 3 (eIF-3) complex, which is involved in protein synthesis of a specialized repertoire of mRNAs and, together with other initiation factors, stimulates binding of mRNA and methionyl-tRNAi to the 40S ribosome. The eIF-3 complex specifically targets and initiates translation of a subset of mRNAs involved in cell proliferation. This Drosophila mojavensis (Fruit fly) protein is Eukaryotic translation initiation factor 3 subunit L.